The sequence spans 466 residues: Glutamyl-tRNA reductase (466 aa).

Substrate contacts are provided by residues 47-50 (TCNR), S107, 112-114 (EQQ), and Q118. C48 serves as the catalytic Nucleophile. Position 194 to 199 (194 to 199 (GAGAMS)) interacts with NADP(+).

The protein belongs to the glutamyl-tRNA reductase family. Homodimer.

The enzyme catalyses (S)-4-amino-5-oxopentanoate + tRNA(Glu) + NADP(+) = L-glutamyl-tRNA(Glu) + NADPH + H(+). Its pathway is porphyrin-containing compound metabolism; protoporphyrin-IX biosynthesis; 5-aminolevulinate from L-glutamyl-tRNA(Glu): step 1/2. In terms of biological role, catalyzes the NADPH-dependent reduction of glutamyl-tRNA(Glu) to glutamate 1-semialdehyde (GSA). The sequence is that of Glutamyl-tRNA reductase from Corynebacterium efficiens (strain DSM 44549 / YS-314 / AJ 12310 / JCM 11189 / NBRC 100395).